The following is a 739-amino-acid chain: MQLRWTQRGMMWLGALLTLLLCSSLKGQENSFTINSIHMQILPHSTVQNGENLTLQCLVDVSTTSRVKPLHQVLFYKDDVLLHNVSSRRNTESYLIPHVRVCDSGRYKCNVILNNKEKTTPEYEVWVKGVSDPRVTLDKKEVIEGGVVVVNCSVPEEKAPVHFTIEKFELNIRGAKKKREKTSQNQNFVTLEFTVEEQDRTIRFQCQAKIFSGSNVESSRPIQSDLVTVRESFSNPKFHIIPEGKVMEGDDLQVKCTVQVTHQAQSFPEIIIQKDREIVAHNSLSSEAVYSVMATTEHNGNYTCKVEASRISKVSSVVVNVTELFSKPKLESSATHLDQGEDLNLLCSIPGAPPANFTIQKGGMTVSQTQNFTKRVSEWDSGLYTCVAGVGRVFKRSNTVQITVCEMLSKPSIFHDSRSEVIKGQTIEVSCQSVNGTAPIFYQLSNTSKPVANQSVGSNKPAIFRVKPTKDVEYCCSADNCHSHSKMFSEVLRVKVIAPVDEAQLVVLKGEVEPGEPIVFYCSVNEGSFPITYKFYKEKESKPFYQDTINATQIMWHKTTASKEYEGQYYCTASNRANLSKHVIQSNTLTVRVYLPLEKGLIAVVVIGVIIVTLVLGAKCYFLKKAKAKQMPVEMSRPAVPLLNSNNEKTLSDAGTEADRHYGYNEDVGNHAMKPLNENKEPLTLDVEYTEVEVTSPEPHQGLGTKGTETETVYSEIRKADPDFVENRYSRTEGSLDGS.

Positions 1-27 (MQLRWTQRGMMWLGALLTLLLCSSLKG) are cleaved as a signal peptide. Residues 28 to 599 (QENSFTINSI…TVRVYLPLEK (572 aa)) are Extracellular-facing. Ig-like C2-type domains are found at residues 35-120 (NSIH…EKTT), 145-213 (GGVV…IFSG), and 236-315 (PKFH…SKVS). N-linked (GlcNAc...) asparagine glycosylation is found at asparagine 52, asparagine 84, and asparagine 151. Cysteine 57 and cysteine 109 form a disulfide bridge. 2 cysteine pairs are disulfide-bonded: cysteine 152–cysteine 206 and cysteine 256–cysteine 304. N-linked (GlcNAc...) asparagine glycosylation is found at asparagine 301, asparagine 320, asparagine 356, asparagine 371, asparagine 435, asparagine 446, asparagine 453, asparagine 550, and asparagine 578. Ig-like C2-type domains follow at residues 328–403 (PKLE…VQIT), 424–493 (GQTI…EVLR), and 499–590 (PVDE…NTLT). Disulfide bonds link cysteine 347–cysteine 386, cysteine 431–cysteine 476, and cysteine 522–cysteine 571. A helical membrane pass occupies residues 600-618 (GLIAVVVIGVIIVTLVLGA). Over 619-739 (KCYFLKKAKA…SRTEGSLDGS (121 aa)) the chain is Cytoplasmic. Cysteine 620 carries the S-palmitoyl cysteine lipid modification. 2 consecutive short sequence motifs (ITIM motif) follow at residues 687-692 (VEYTEV) and 712-717 (TVYSEI). Phosphotyrosine; by FER is present on residues tyrosine 689 and tyrosine 714. The membrane-bound segment which detaches upon phosphorylation stretch occupies residues 708–730 (TETETVYSEIRKADPDFVENRYS). The segment at 722-739 (PDFVENRYSRTEGSLDGS) is may play a role in cytoprotective signaling. 2 positions are modified to phosphoserine: serine 730 and serine 735.

Trans-homodimer (via Ig-like C2-type 1 and Ig-like C2-type 2 domains); trans-homodimerization is required for cell-cell interaction. Forms a complex with BDKRB2 and GNAQ. Interacts with BDKRB2 and GNAQ. Interacts with PTPN11; Tyr-714 is critical for PTPN11 recruitment. Interacts with FER. Interacts with CD177; the interaction is Ca(2+)-dependent; the interaction is direct. In terms of processing, phosphorylated on Ser and Tyr residues by src kinases after cellular activation. Upon activation, phosphorylated on Ser-730 which probably initiates the dissociation of the membrane-interaction segment (residues 708-730) from the cell membrane allowing the sequential phosphorylation of Tyr-714 and Tyr-689. Constitutively phosphorylated on Ser-735 in resting platelets. Phosphorylated on tyrosine residues by FER and FES in response to FCER1 activation. In endothelial cells Fyn mediates mechanical-force (stretch or pull) induced tyrosine phosphorylation. Post-translationally, palmitoylation by ZDHHC21 is necessary for cell surface expression in endothelial cells and enrichment in membrane rafts.

Its subcellular location is the cell membrane. The protein localises to the membrane raft. The protein resides in the cell junction. Functionally, cell adhesion molecule which is required for leukocyte transendothelial migration (TEM) under most inflammatory conditions. Tyr-689 plays a critical role in TEM and is required for efficient trafficking of PECAM1 to and from the lateral border recycling compartment (LBRC) and is also essential for the LBRC membrane to be targeted around migrating leukocytes. Trans-homophilic interaction may play a role in endothelial cell-cell adhesion via cell junctions. Heterophilic interaction with CD177 plays a role in transendothelial migration of neutrophils. Homophilic ligation of PECAM1 prevents macrophage-mediated phagocytosis of neighboring viable leukocytes by transmitting a detachment signal. Promotes macrophage-mediated phagocytosis of apoptotic leukocytes by tethering them to the phagocytic cells; PECAM1-mediated detachment signal appears to be disabled in apoptotic leukocytes. Modulates bradykinin receptor BDKRB2 activation. Regulates bradykinin- and hyperosmotic shock-induced ERK1/2 activation in endothelial cells. Induces susceptibility to atherosclerosis. This chain is Platelet endothelial cell adhesion molecule (PECAM1), found in Bos taurus (Bovine).